Consider the following 270-residue polypeptide: UPF0354 protein BA_4944/GBAA_4944/BAS4588 (270 aa).

It belongs to the UPF0354 family.

The polypeptide is UPF0354 protein BA_4944/GBAA_4944/BAS4588 (Bacillus anthracis).